The following is a 297-amino-acid chain: tRNA-cytidine(32) 2-sulfurtransferase (297 aa).

Positions 45 to 50 (SGGKDS) match the PP-loop motif motif. Residues cysteine 120, cysteine 123, and cysteine 211 each contribute to the [4Fe-4S] cluster site.

It belongs to the TtcA family. Homodimer. Mg(2+) is required as a cofactor. It depends on [4Fe-4S] cluster as a cofactor.

It is found in the cytoplasm. The catalysed reaction is cytidine(32) in tRNA + S-sulfanyl-L-cysteinyl-[cysteine desulfurase] + AH2 + ATP = 2-thiocytidine(32) in tRNA + L-cysteinyl-[cysteine desulfurase] + A + AMP + diphosphate + H(+). It participates in tRNA modification. Catalyzes the ATP-dependent 2-thiolation of cytidine in position 32 of tRNA, to form 2-thiocytidine (s(2)C32). The sulfur atoms are provided by the cysteine/cysteine desulfurase (IscS) system. In Vibrio campbellii (strain ATCC BAA-1116), this protein is tRNA-cytidine(32) 2-sulfurtransferase.